Here is a 790-residue protein sequence, read N- to C-terminus: MKFSHNWLNEYLGDTQDSQNLADTLTLAGLEVDAIEPVVAEKVSGVVVGQIKTINKHPDADKLNVCSVDAGEDELLTIVCGASNIYEGMKAPVAKIGAVLPGNFKIKKSKLRGQESFGMMCSEEELGLAEKADGLMDLPIDAPVGTDINKYLNLDDNIIEVDLTPNRADCLSVYGIAREVSALTKTELKNLEIPEPKVVIDDTKEVNITATDACHAYYGCIIKNVNNKIQTPLWMVEKLRRSGIGSISFFVDVTNYVMLLTGQPMHAFDLDKLEGRINVRYAKNNEELTLLDQTQVKLDCDTLIIADDKKALAIAGVMGGLDSSITDSTTNIFLESAFFVPEKIAGKARKYNLHTDSSHRFERGVDPQLAKKAMKIAIRLINEIAGGEVAPIHGAEDLANLNKQIKINLSIKKLNHVLGTNFDIEYVTEVLKALHMDVATSFDGNCIEVIPPSYRFDLEIPEDLIEEVARIYGYSKLPETMPKYAAAKTNISETYQSLDTLNMRLIDRGYHETINYSFIDPKFDEFFFADRGIAIQNPISQDLSIMRQSLIPGLINTFKANTSRQQNRVRIFEKGACFKLQDNQRIQFDRIAGLAYGELLNINWSNSKKVDFFDVKADVEALCNDLTSLSFEVCNDINWLHLGQSAYILANGNKIGVIGVIHPTVLKNFQIKAKAPIVFELDLDVLIKRQIPNFTKISKYPSVSRDISFLVDKSVLAGDIIKAIKALNINILKDVSIFDIYESQDSDRKSIALNMLFQDNLQTLDDKVIVESIDKVLEALKTKFNIEQRV.

The tRNA-binding domain occupies 40-149 (AEKVSGVVVG…IDAPVGTDIN (110 aa)). In terms of domain architecture, B5 spans 402 to 479 (NKQIKINLSI…RIYGYSKLPE (78 aa)). Mg(2+) is bound by residues D457, D463, E466, and E467. In terms of domain architecture, FDX-ACB spans 698–789 (SKYPSVSRDI…LKTKFNIEQR (92 aa)).

This sequence belongs to the phenylalanyl-tRNA synthetase beta subunit family. Type 1 subfamily. In terms of assembly, tetramer of two alpha and two beta subunits. Requires Mg(2+) as cofactor.

It is found in the cytoplasm. It carries out the reaction tRNA(Phe) + L-phenylalanine + ATP = L-phenylalanyl-tRNA(Phe) + AMP + diphosphate + H(+). This Francisella tularensis subsp. tularensis (strain SCHU S4 / Schu 4) protein is Phenylalanine--tRNA ligase beta subunit.